The primary structure comprises 208 residues: OVARIAN TUMOR DOMAIN-containing deubiquitinating enzyme 2 (208 aa).

The OTU domain maps to 5–127 (IVRRVIPSDN…GLHYDALALS (123 aa)). Residue Asp-13 is part of the active site. Cys-16 (nucleophile) is an active-site residue. Active-site residues include His-120 and His-201.

This sequence belongs to the peptidase C85 family.

The catalysed reaction is Thiol-dependent hydrolysis of ester, thioester, amide, peptide and isopeptide bonds formed by the C-terminal Gly of ubiquitin (a 76-residue protein attached to proteins as an intracellular targeting signal).. Its function is as follows. Hydrolase that can remove conjugated ubiquitin from proteins in vitro and may therefore play an important regulatory role at the level of protein turnover by preventing degradation. Cysteine protease with a preference for 'Lys-63' and 'Lys-48' -linked ubiquitin (UB) tetramers as substrates. This Arabidopsis thaliana (Mouse-ear cress) protein is OVARIAN TUMOR DOMAIN-containing deubiquitinating enzyme 2.